The sequence spans 911 residues: Valine--tRNA ligase (911 aa).

A 'HIGH' region motif is present at residues 53-63 (PNVTGTLHLGH). The 'KMSKS' region motif lies at 533-537 (KMSKS). Lysine 536 contributes to the ATP binding site. The stretch at 845–910 (KEIERLTKEL…NRLAMLRSMQ (66 aa)) forms a coiled coil.

The protein belongs to the class-I aminoacyl-tRNA synthetase family. ValS type 1 subfamily. In terms of assembly, monomer.

The protein resides in the cytoplasm. It carries out the reaction tRNA(Val) + L-valine + ATP = L-valyl-tRNA(Val) + AMP + diphosphate. Its function is as follows. Catalyzes the attachment of valine to tRNA(Val). As ValRS can inadvertently accommodate and process structurally similar amino acids such as threonine, to avoid such errors, it has a 'posttransfer' editing activity that hydrolyzes mischarged Thr-tRNA(Val) in a tRNA-dependent manner. The polypeptide is Valine--tRNA ligase (Symbiobacterium thermophilum (strain DSM 24528 / JCM 14929 / IAM 14863 / T)).